The chain runs to 3163 residues: Genome polyprotein (3163 aa).

Positions 219–362 (KMSDQGVDML…KTMSLKIVHF (144 aa)) constitute a Peptidase S30 domain. Residues histidine 270, aspartate 279, and serine 313 each act as for P1 proteinase activity in the active site. Residues 414–417 (KITC) carry the Involved in interaction with stylet and aphid transmission motif. Residues 672-674 (PTK) carry the Involved in virions binding and aphid transmission motif. One can recognise a Peptidase C6 domain in the interval 698 to 820 (MYIAKEGYCY…ESSLKHYRVG (123 aa)). Active-site for helper component proteinase activity residues include cysteine 706 and histidine 779. The region spanning 1300–1452 (KIAHESDKDI…TQYPVSISTE (153 aa)) is the Helicase ATP-binding domain. 1313 to 1320 (GAVGSGKS) serves as a coordination point for ATP. The short motif at 1402–1405 (DECH) is the DEAH box element. Residues 1471–1630 (DVISKGDNIL…GLPVITNNVS (160 aa)) enclose the Helicase C-terminal domain. The Cytoplasmic segment spans residues 1871–1888 (STNEMSKFLQLKGKWNKT). Residues 1889 to 1909 (LITRDVLVICGVLGGGVWMVV) form a helical membrane-spanning segment. Over 1910 to 1923 (QHFRSKVSEPVTHE) the chain is Lumenal. The Nuclear localization signal signature appears at 1964–1971 (KKGKSKGR). The binding to host eIF(iso)4E stretch occupies residues 1983–2017 (INMYGFDPEDFSAVRFVDPLTGATLDDNPFTDITL). O-(5'-phospho-RNA)-tyrosine is present on tyrosine 1986. A Peptidase C4 domain is found at 2116 to 2334 (SNSMFRGLRD…ISWGSLNIQA (219 aa)). Residues histidine 2161, aspartate 2196, and cysteine 2266 each act as for nuclear inclusion protein A activity in the active site. The region spanning 2600-2724 (WVYCDADGSQ…SVHPEYEYIL (125 aa)) is the RdRp catalytic domain. The interval 2883 to 2934 (DLTEEQKQAEKEKKEREKAEKERERQKQLAFKKGKDVAQEEGKRDKEVNAGT) is disordered. The span at 2886 to 2930 (EEQKQAEKEKKEREKAEKERERQKQLAFKKGKDVAQEEGKRDKEV) shows a compositional bias: basic and acidic residues.

It belongs to the potyviridae genome polyprotein family. As to quaternary structure, interacts with host eIF4E protein (via cap-binding region); this interaction mediates the translation of the VPg-viral RNA conjugates. Part of a complex that comprises VPg, RNA, host EIF4E and EIF4G; this interaction mediates the translation of the VPg-viral RNA conjugates. In terms of assembly, interacts, via N-terminal region, with host Sec24a protein in COPII-coated vesicles. This binding triggers the formation of host endoplasmic reticulum (ER)-derived viral vesicles involved in cell-to-cell viral movement. VPg is uridylylated by the polymerase and is covalently attached to the 5'-end of the genomic RNA. This uridylylated form acts as a nucleotide-peptide primer for the polymerase. Post-translationally, potyviral RNA is expressed as two polyproteins which undergo post-translational proteolytic processing. Genome polyprotein is processed by NIa-pro, P1 and HC-pro proteinases resulting in the production of at least ten individual proteins. P3N-PIPO polyprotein is cleaved by P1 and HC-pro proteinases resulting in the production of three individual proteins. The P1 proteinase and the HC-pro cleave only their respective C-termini autocatalytically. 6K1 is essential for proper proteolytic separation of P3 from CI.

The protein resides in the host cytoplasm. The protein localises to the host nucleus. Its subcellular location is the host cytoplasmic vesicle. It localises to the host membrane. It is found in the virion. The enzyme catalyses RNA(n) + a ribonucleoside 5'-triphosphate = RNA(n+1) + diphosphate. It carries out the reaction Hydrolyzes glutaminyl bonds, and activity is further restricted by preferences for the amino acids in P6 - P1' that vary with the species of potyvirus, e.g. Glu-Xaa-Xaa-Tyr-Xaa-Gln-|-(Ser or Gly) for the enzyme from tobacco etch virus. The natural substrate is the viral polyprotein, but other proteins and oligopeptides containing the appropriate consensus sequence are also cleaved.. The catalysed reaction is Hydrolyzes a Gly-|-Gly bond at its own C-terminus, commonly in the sequence -Tyr-Xaa-Val-Gly-|-Gly, in the processing of the potyviral polyprotein.. In terms of biological role, cysteine protease that cleaves a Gly-Gly dipeptide at its own C-terminus. Required for aphid transmission and also has proteolytic activity. Interacts with virions and aphid stylets. Acts as a suppressor of RNA-mediated gene silencing, also known as post-transcriptional gene silencing (PTGS), a mechanism of plant viral defense that limits the accumulation of viral RNAs. May have RNA-binding activity. Its function is as follows. Has helicase activity. It may be involved in replication. Functionally, indispensable for virus replication. Responsible for the formation of peripheral motile host endoplasmic reticulum (ER)-derived viral vesicles called 'viral factories', seat of the viral RNA (vRNA) replication and carrying vRNA to plasmodesmata for delivery into adjacent non-infected cells; this process relies on host Sec24a-binding. In terms of biological role, mediates the cap-independent, EIF4E-dependent translation of viral genomic RNAs. Binds to the cap-binding site of host EIF4E and thus interferes with the host EIF4E-dependent mRNA export and translation. VPg-RNA directly binds EIF4E and is a template for transcription. Also forms trimeric complexes with EIF4E-EIF4G, which are templates for translation. Its function is as follows. Has RNA-binding and proteolytic activities. Functionally, RNA-dependent RNA polymerase that ensures transcription and replication of viral RNA (vRNA). Involved in aphid transmission, cell-to-cell and systemis movement, encapsidation of the viral RNA and in the regulation of viral RNA amplification. The chain is Genome polyprotein from Brassica (TuMV).